The sequence spans 565 residues: Arginine--tRNA ligase (565 aa).

Positions 126–136 (ANPTGPLHIGH) match the 'HIGH' region motif.

The protein belongs to the class-I aminoacyl-tRNA synthetase family. As to quaternary structure, monomer.

The protein resides in the cytoplasm. It catalyses the reaction tRNA(Arg) + L-arginine + ATP = L-arginyl-tRNA(Arg) + AMP + diphosphate. This chain is Arginine--tRNA ligase, found in Wolbachia sp. subsp. Brugia malayi (strain TRS).